A 253-amino-acid chain; its full sequence is Putative B3 domain-containing protein Os03g0619850 (253 aa).

Positions 26–119 (MSCFLIRMTT…CFEVMILDSD (94 aa)) form a DNA-binding region, TF-B3. 2 disordered regions span residues 126–150 (LKSN…AGPP) and 230–253 (HRDA…EQDS). Positions 230-239 (HRDADQERQM) are enriched in basic and acidic residues.

The protein localises to the nucleus. In Oryza sativa subsp. japonica (Rice), this protein is Putative B3 domain-containing protein Os03g0619850.